A 654-amino-acid polypeptide reads, in one-letter code: Neuroendocrine convertase 2 (654 aa).

The first 21 residues, 1–21, serve as a signal peptide directing secretion; it reads MAAATWSWLLAPFLLLHWASA. Positions 22–121 are excised as a propeptide; that stretch reads GAGGGAGGSG…VQQPGFKRVK (100 aa). The region spanning 158–483 is the Peptidase S8 domain; the sequence is QWYLKNTGQN…FGVLDAGAMV (326 aa). Asn189 carries N-linked (GlcNAc...) asparagine glycosylation. Active-site charge relay system residues include Asp196 and His237. 2 disulfides stabilise this stretch: Cys254-Cys404 and Cys346-Cys376. Asn312 carries N-linked (GlcNAc...) asparagine glycosylation. The active-site Charge relay system is the Ser412. The P/Homo B domain maps to 491–627; that stretch reads SVPPRYHCEA…SLVLHGTKEA (137 aa). Cys498 and Cys524 are oxidised to a cystine. N-linked (GlcNAc...) asparagine glycosylation occurs at Asn544.

Belongs to the peptidase S8 family. Furin subfamily. In terms of tissue distribution, expressed in the central nervous system (CNS) and midgut endocrine cells of third instar larva (at protein level). In the CNS, expressed in the CA-LP1 and CA-LP2 neurons which innervate the corpus allatum, and in the CC-MS2 neurons which innervate the corpora cardiaca of the ring gland. Also expressed in the CC-MS1, SP3, Tv and Va neurons. Expressed in Akh-producing cells of the corpora cardiaca. In the embryo, restricted to the final stages of embryogenesis where expression is found in anterior sensory structures and in only 168 cells in the brain and ventral nerve cord. After larvae hatch, the sensory structures and most cells in the CNS turn off or substantially reduce expression. In third instar larva, expressed at higher levels in the anterior section than in the posterior section. Little expression is detected in the adult head. In the developing eye, expressed at higher levels in pale-type R7 photoreceptor cells than in yellow-type R7 cells although expression is not seen in all pale-type R7 cells. Also expressed in outer photoreceptor cells.

It is found in the secreted. The catalysed reaction is Release of protein hormones and neuropeptides from their precursors, generally by hydrolysis of -Lys-Arg-|- bonds.. Functionally, serine endopeptidase which is involved in the processing of hormone and other protein precursors at sites comprised of pairs of basic amino acid residues. Required during embryonic and larval development, probably by proteolytically processing peptide hormones involved in hatching, larval growth and larval molting. Required for the processing and activation of Akh which maintains normal hemolymph sugar levels. Has been shown in one study to be required for processing of sli into slit N-product and slit C-product in the embryo which is necessary for lateral transverse muscle elongation but has been shown in another study not to be required for sli cleavage. Required for larval hatching. Also required for normal larval wandering behavior which occurs prior to pupariation. Required during pupal development for head eversion, leg and wing disk extension, and abdominal differentiation. Required during eye development for R8 photoreceptor cell specification by regulating processing of ligands required for the BMP and activin signaling pathways. The chain is Neuroendocrine convertase 2 from Drosophila melanogaster (Fruit fly).